We begin with the raw amino-acid sequence, 242 residues long: ATP synthase subunit b (242 aa).

2 helical membrane passes run 8 to 28 (VLPFLLVLLFAFAPLALASAP) and 87 to 107 (LMDLFWRVLNFAVLMAILIKF).

Belongs to the ATPase B chain family. In terms of assembly, F-type ATPases have 2 components, F(1) - the catalytic core - and F(0) - the membrane proton channel. F(1) has five subunits: alpha(3), beta(3), gamma(1), delta(1), epsilon(1). F(0) has three main subunits: a(1), b(2) and c(10-14). The alpha and beta chains form an alternating ring which encloses part of the gamma chain. F(1) is attached to F(0) by a central stalk formed by the gamma and epsilon chains, while a peripheral stalk is formed by the delta and b chains.

The protein localises to the cell inner membrane. In terms of biological role, f(1)F(0) ATP synthase produces ATP from ADP in the presence of a proton or sodium gradient. F-type ATPases consist of two structural domains, F(1) containing the extramembraneous catalytic core and F(0) containing the membrane proton channel, linked together by a central stalk and a peripheral stalk. During catalysis, ATP synthesis in the catalytic domain of F(1) is coupled via a rotary mechanism of the central stalk subunits to proton translocation. Component of the F(0) channel, it forms part of the peripheral stalk, linking F(1) to F(0). The protein is ATP synthase subunit b of Desulfotalea psychrophila (strain LSv54 / DSM 12343).